The chain runs to 631 residues: Phosphomethylpyrimidine synthase (631 aa).

Substrate-binding positions include asparagine 239, methionine 268, tyrosine 297, histidine 333, 353-355, 394-397, and glutamate 433; these read SRG and DGLR. Histidine 437 provides a ligand contact to Zn(2+). Tyrosine 460 provides a ligand contact to substrate. Histidine 501 is a Zn(2+) binding site. The [4Fe-4S] cluster site is built by cysteine 581, cysteine 584, and cysteine 589.

Belongs to the ThiC family. Homodimer. Requires [4Fe-4S] cluster as cofactor.

The catalysed reaction is 5-amino-1-(5-phospho-beta-D-ribosyl)imidazole + S-adenosyl-L-methionine = 4-amino-2-methyl-5-(phosphooxymethyl)pyrimidine + CO + 5'-deoxyadenosine + formate + L-methionine + 3 H(+). Its pathway is cofactor biosynthesis; thiamine diphosphate biosynthesis. Functionally, catalyzes the synthesis of the hydroxymethylpyrimidine phosphate (HMP-P) moiety of thiamine from aminoimidazole ribotide (AIR) in a radical S-adenosyl-L-methionine (SAM)-dependent reaction. The sequence is that of Phosphomethylpyrimidine synthase from Salmonella schwarzengrund (strain CVM19633).